Consider the following 956-residue polypeptide: Glutamate receptor ionotropic, kainate 4 (956 aa).

Positions 1 to 20 (MPRVSAPLVLLPAWLLMVAC) are cleaved as a signal peptide. Residues 21 to 545 (SPHSLRIAAI…YFSFLDPFSP (525 aa)) are Extracellular-facing. N-linked (GlcNAc...) asparagine glycans are attached at residues Asn158, Asn220, Asn272, Asn286, Asn323, Asn408, Asn415, and Asn479. Residues Gly500, Thr502, and Arg507 each contribute to the L-glutamate site. A helical transmembrane segment spans residues 546–566 (GVWLFMLLAYLAVSCVLFLVA). At 567–623 (RLTPYEWYSPHPCAQGRCNLLVNQYSLGNSLWFPVGGFMQQGSTIAPRALSTRCVSG) the chain is on the cytoplasmic side. A helical transmembrane segment spans residues 624–644 (VWWAFTLIIISSYTANLAAFL). Residues 645 to 804 (TVQRMEVPIE…HRAKGLGMEN (160 aa)) lie on the Extracellular side of the membrane. Residues Ser674, Ser675, and Glu723 each coordinate L-glutamate. Residue Asn736 is glycosylated (N-linked (GlcNAc...) asparagine). A helical membrane pass occupies residues 805–825 (IGGIFVVLICGLIVAIFMAML). Residues 826-956 (EFLWTLRHSE…DKTTNSSEPE (131 aa)) lie on the Cytoplasmic side of the membrane. Residues 931-956 (LRARPSPARSEESLEWDKTTNSSEPE) form a disordered region. Positions 939-948 (RSEESLEWDK) are enriched in basic and acidic residues.

This sequence belongs to the glutamate-gated ion channel (TC 1.A.10.1) family. GRIK4 subfamily. In terms of assembly, homodimer. Can form functional heteromeric receptors with GRIK1, GRIK2 and GRIK3 subunits. Forms a heteromeric complex with GRIK2. In terms of tissue distribution, expressed in the hippocampus and cerebellum (at protein level).

Its subcellular location is the cell membrane. It localises to the postsynaptic cell membrane. The protein localises to the presynaptic cell membrane. Functionally, ionotropic glutamate receptor that functions as a cation-permeable ligand-gated ion channel. Cannot form functional channels on its own and produces channel activity only in heteromeric assembly with GRIK1, GRIK2 and GRIK3 subunits. This Mus musculus (Mouse) protein is Glutamate receptor ionotropic, kainate 4 (Grik4).